We begin with the raw amino-acid sequence, 347 residues long: Selenide, water dikinase (347 aa).

Cys17 is an active-site residue. ATP contacts are provided by residues Lys20 and 48 to 50 (TRD). Asp51 is a binding site for Mg(2+). Residues Asp68, Asp91, and 139–141 (GHS) contribute to the ATP site. Mg(2+) is bound at residue Asp91. Asp227 is a Mg(2+) binding site.

Belongs to the selenophosphate synthase 1 family. Class I subfamily. As to quaternary structure, homodimer. Requires Mg(2+) as cofactor.

It catalyses the reaction hydrogenselenide + ATP + H2O = selenophosphate + AMP + phosphate + 2 H(+). Functionally, synthesizes selenophosphate from selenide and ATP. This chain is Selenide, water dikinase, found in Escherichia coli O139:H28 (strain E24377A / ETEC).